The sequence spans 1470 residues: Actin cytoskeleton-regulatory complex protein pan1 (1470 aa).

Residues 1–157 form a disordered region; that stretch reads MYSSSNSFLG…PPPKSSGSKI (157 aa). The segment covering 25–48 has biased composition (low complexity); that stretch reads QPPYSQFPQGQQQIPQQTGFQPQP. Positions 54 to 75 are enriched in polar residues; the sequence is QSASHLQPQPTGFPTGQLQPQF. The segment covering 77–101 has biased composition (low complexity); sequence GFPGAAPQQQQQQLGGYQAPAQQPQ. The segment covering 129–139 has biased composition (polar residues); it reads RTSSEIANSFS. The EH 1 domain maps to 169–257; it reads DQAKFEQLFK…DKIKNEVSSM (89 aa). Positions 201–236 constitute an EF-hand 1 domain; the sequence is LPGSELSKIWVLSDTTKSGQLFFPEFALAMYLCNLR. Disordered stretches follow at residues 282 to 305 and 343 to 377; these read DAPLLENKSAPPAPQHPKPQQPSN and QATGFPGQSQQQYLQPQPTGLMTNPQATGYNGPRP. The segment covering 292 to 301 has biased composition (pro residues); the sequence is PPAPQHPKPQ. Residues 348 to 360 are compositionally biased toward low complexity; it reads PGQSQQQYLQPQP. The EH 2 domain occupies 458 to 547; that stretch reads EKKIYDDLFR…PELIPPSTRN (90 aa). Residues 491–526 form the EF-hand 2 domain; that stretch reads LDRKDLERIWTLADPNNRGRLNMDEFAVAMHLIYRK. 4 disordered regions span residues 614-641, 794-864, 886-1087, and 1099-1470; these read GYRSSARRRMGNDARPSSPAASQASEEE, ELAG…HERR, GSRT…LKEK, and EQVR…RVLD. Residues 627–637 show a composition bias toward low complexity; that stretch reads ARPSSPAASQA. Positions 633–758 form a coiled coil; it reads AASQASEEEL…LFRLKDAKAH (126 aa). 2 stretches are compositionally biased toward basic and acidic residues: residues 809-864 and 892-910; these read AAAR…HERR and VRKEEESRASEQRLRHEEP. The span at 917 to 932 shows a compositional bias: low complexity; it reads LSPAPSAGSAGSLPGS. Composition is skewed to basic and acidic residues over residues 933-951, 971-1006, 1052-1087, 1099-1127, and 1134-1146; these read THEDRVAAARERAQRRIAE, RQEREKREREERLRQAEEEDAKREQERQRRLAEEQR, AAREQAIREEQQAQEEETNRLEMEAQQREEELLKEK, EQVRQGKIRKQEEKRRKEEAERLAKEKEA, and AEIERAKERERQL. The stretch at 963–1159 forms a coiled coil; sequence DTSETLLQRQ…LEGLDEESSS (197 aa). The span at 1151 to 1163 shows a compositional bias: acidic residues; sequence EGLDEESSSDDEG. Residues 1169-1180 are compositionally biased toward polar residues; it reads PEDSTPTQSQLL. Positions 1181 to 1195 are enriched in low complexity; that stretch reads PTVTPAAPVSAPESE. A compositionally biased stretch (polar residues) spans 1243–1269; the sequence is PNVTSPRADVHSTNPFHRLAQQESSKP. Positions 1277-1286 are enriched in basic and acidic residues; the sequence is LERKSRARPE. Polar residues predominate over residues 1340–1352; the sequence is SKSSTPVQDSPVT. Composition is skewed to pro residues over residues 1367 to 1380 and 1389 to 1433; these read AAPPPPPPPPPPAA and APPP…PTPA. The region spanning 1437–1454 is the WH2 domain; that stretch reads DRSALLASIQMGKGLRKV. Residues 1457–1470 show a composition bias toward polar residues; it reads NDRSTSSSAGRVLD.

The protein belongs to the PAN1 family. In terms of assembly, component of the PAN1 actin cytoskeleton-regulatory complex.

The protein localises to the cell membrane. It is found in the endosome membrane. Its subcellular location is the cytoplasm. The protein resides in the cytoskeleton. It localises to the actin patch. Component of the PAN1 actin cytoskeleton-regulatory complex required for the internalization of endosomes during actin-coupled endocytosis. The complex links the site of endocytosis to the cell membrane-associated actin cytoskeleton. Mediates uptake of external molecules and vacuolar degradation of plasma membrane proteins. Plays a role in the proper organization of the cell membrane-associated actin cytoskeleton and promotes its destabilization. This Neosartorya fischeri (strain ATCC 1020 / DSM 3700 / CBS 544.65 / FGSC A1164 / JCM 1740 / NRRL 181 / WB 181) (Aspergillus fischerianus) protein is Actin cytoskeleton-regulatory complex protein pan1 (pan1).